The primary structure comprises 139 residues: QFRPQPQPSYSGNTSPIPIIRYSNEISPDGSYAWSYETGNGIAADESGALENPGQKDLEAMRAQGSFSYTAPDGSPISVRYVADRDGFHPEGAHLPTPPPIPPAIQRALDFIASQPQQPGNNGGGQFPRPQPFPRPGAF.

Q1 carries the pyrrolidone carboxylic acid modification. The O-linked (HexNAc...) threonine glycan is linked to T14. An O-linked (HexNAc...) serine glycan is attached at S15. The Chitin-binding type R&amp;R domain maps to 29-99 (DGSYAWSYET…PEGAHLPTPP (71 aa)). T97 carries an O-linked (HexNAc...) threonine glycan. The segment at 111–139 (FIASQPQQPGNNGGGQFPRPQPFPRPGAF) is disordered. The segment covering 129–139 (RPQPFPRPGAF) has biased composition (pro residues).

In terms of biological role, component of the abdominal endocuticle. The sequence is that of Endocuticle structural glycoprotein SgAbd-8 from Schistocerca gregaria (Desert locust).